Consider the following 641-residue polypeptide: Transcription termination factor MTERF2, chloroplastic (641 aa).

Disordered regions lie at residues 54 to 80 (LKLNKNPNESQETFVPPPPPPRRDLDG) and 606 to 641 (FEAGLDSEDSQPSDENISDQEIAFSDEAEEEEDLTE). Residues 610 to 641 (LDSEDSQPSDENISDQEIAFSDEAEEEEDLTE) are compositionally biased toward acidic residues.

It belongs to the mTERF family.

The protein resides in the plastid. It localises to the chloroplast. Transcription termination factor involved in processing of plastid transcripts. Essential for embryogenesis. The polypeptide is Transcription termination factor MTERF2, chloroplastic (Arabidopsis thaliana (Mouse-ear cress)).